We begin with the raw amino-acid sequence, 228 residues long: Translation initiation factor 6 (228 aa).

Belongs to the eIF-6 family.

In terms of biological role, binds to the 50S ribosomal subunit and prevents its association with the 30S ribosomal subunit to form the 70S initiation complex. The polypeptide is Translation initiation factor 6 (Thermococcus onnurineus (strain NA1)).